A 421-amino-acid chain; its full sequence is Zinc chaperone AztD (421 aa).

The first 29 residues, 1–29, serve as a signal peptide directing secretion; that stretch reads MMENIMKKRLLSTSISTLLLGLSVMPAFA. Residues His-101, His-104, Asp-106, His-126, His-169, His-216, and His-405 each coordinate Zn(2+). An intrachain disulfide couples Cys-212 to Cys-229. Residues 399–421 form a disordered region; the sequence is GGSGKVHGEHHDHEAHHHDDHAH. Residues 404-421 show a composition bias toward basic and acidic residues; it reads VHGEHHDHEAHHHDDHAH. The N-terminal Zn(2+)-binding motif; binds a third Zn(2+) with low affinity signature appears at 408-419; sequence HHDHEAHHHDDH.

As to quaternary structure, monomer.

The protein localises to the periplasm. In terms of biological role, acts as a zinc chaperone in the AztABCD zinc transport system. Directly transfers one zinc cation to the solute binding protein AztC; the transfer occurs without the formation of a stable interaction. Binds 3 Zn(2+), two with high affinity and one with low affinity, and transfers only Zn(2+) bound to site 2 to AztC. This is Zinc chaperone AztD from Citrobacter koseri (strain ATCC BAA-895 / CDC 4225-83 / SGSC4696).